We begin with the raw amino-acid sequence, 242 residues long: ADP-dependent L-serine kinase SerK (242 aa).

E30 is a catalytic residue. Positions 43, 49, 51, and 52 each coordinate ADP. V68 is a binding site for O-phospho-L-serine. Residues D69, G70, H71, H72, and R73 each contribute to the ADP site. Residue D69 participates in Mg(2+) binding. O-phospho-L-serine-binding residues include G70, H71, and H72. The O-phospho-L-serine site is built by W102, K221, T223, and H225.

Belongs to the SerK family. Requires Mg(2+) as cofactor.

The enzyme catalyses L-serine + ADP = O-phospho-L-serine + AMP + H(+). The protein operates within amino-acid biosynthesis; L-cysteine biosynthesis; L-cysteine from L-serine: step 1/2. Its function is as follows. Free serine kinase that uses ADP to phosphorylate L-serine to yield O-phospho-L-serine and AMP. This is ADP-dependent L-serine kinase SerK from Thermococcus kodakarensis (strain ATCC BAA-918 / JCM 12380 / KOD1) (Pyrococcus kodakaraensis (strain KOD1)).